The following is a 393-amino-acid chain: O-phospho-L-seryl-tRNA:Cys-tRNA synthase 1 (393 aa).

Residues 85–86 (AR), Asn-190, and 213–215 (SGH) contribute to the pyridoxal 5'-phosphate site. Position 216 is an N6-(pyridoxal phosphate)lysine (Lys-216).

It belongs to the SepCysS family. As to quaternary structure, homodimer. Interacts with SepRS. The cofactor is pyridoxal 5'-phosphate.

The catalysed reaction is O-phospho-L-seryl-tRNA(Cys) + hydrogen sulfide + H(+) = L-cysteinyl-tRNA(Cys) + phosphate. Its function is as follows. Converts O-phospho-L-seryl-tRNA(Cys) (Sep-tRNA(Cys)) to L-cysteinyl-tRNA(Cys) (Cys-tRNA(Cys)). This is O-phospho-L-seryl-tRNA:Cys-tRNA synthase 1 from Methanospirillum hungatei JF-1 (strain ATCC 27890 / DSM 864 / NBRC 100397 / JF-1).